A 324-amino-acid chain; its full sequence is o-succinylbenzoate synthase (324 aa).

Lysine 135 acts as the Proton donor in catalysis. Mg(2+) is bound by residues aspartate 163, glutamate 192, and aspartate 215. The Proton acceptor role is filled by lysine 237.

The protein belongs to the mandelate racemase/muconate lactonizing enzyme family. MenC type 1 subfamily. The cofactor is a divalent metal cation.

It catalyses the reaction (1R,6R)-6-hydroxy-2-succinyl-cyclohexa-2,4-diene-1-carboxylate = 2-succinylbenzoate + H2O. It functions in the pathway quinol/quinone metabolism; 1,4-dihydroxy-2-naphthoate biosynthesis; 1,4-dihydroxy-2-naphthoate from chorismate: step 4/7. Its pathway is quinol/quinone metabolism; menaquinone biosynthesis. In terms of biological role, converts 2-succinyl-6-hydroxy-2,4-cyclohexadiene-1-carboxylate (SHCHC) to 2-succinylbenzoate (OSB). The sequence is that of o-succinylbenzoate synthase from Aliivibrio fischeri (strain ATCC 700601 / ES114) (Vibrio fischeri).